The sequence spans 302 residues: Bifunctional phosphoglucose/phosphomannose isomerase (302 aa).

The SIS domain occupies 27-160 (VEGEVVRIEA…KVYGIDVKIP (134 aa)). D-fructose 6-phosphate is bound by residues Gly-47, Ser-48, Ser-87, Ser-89, Thr-92, and Arg-135. 6 residues coordinate D-glucose 6-phosphate: Gly-47, Ser-48, Ser-87, Ser-89, Thr-92, and Arg-135. The active-site Proton acceptor is the Glu-203. The D-fructose 6-phosphate site is built by His-219 and Lys-298. Residues His-219 and Lys-298 each contribute to the D-glucose 6-phosphate site. The Proton donor role is filled by His-219. Lys-298 (proton acceptor) is an active-site residue.

This sequence belongs to the PGI/PMI family. As to quaternary structure, homodimer.

It is found in the cytoplasm. It carries out the reaction alpha-D-glucose 6-phosphate = beta-D-fructose 6-phosphate. It catalyses the reaction D-mannose 6-phosphate = D-fructose 6-phosphate. Its activity is regulated as follows. Inhibited by 5-phosphoarabinonate (PAB) and 6-phosphogluconate. Its function is as follows. Dual specificity isomerase that catalyzes the isomerization of both glucose-6-phosphate and mannose-6-phosphate to fructose-6-phosphate with similar catalytic efficiency. The sequence is that of Bifunctional phosphoglucose/phosphomannose isomerase from Pyrobaculum aerophilum (strain ATCC 51768 / DSM 7523 / JCM 9630 / CIP 104966 / NBRC 100827 / IM2).